We begin with the raw amino-acid sequence, 213 residues long: Orotate phosphoribosyltransferase (213 aa).

Lys26 lines the 5-phospho-alpha-D-ribose 1-diphosphate pocket. 34–35 (FF) serves as a coordination point for orotate. 5-phospho-alpha-D-ribose 1-diphosphate contacts are provided by residues 72–73 (YK), Arg99, Lys100, Lys103, His105, and 124–132 (DDVITAGTA). Residues Thr128 and Arg156 each contribute to the orotate site.

The protein belongs to the purine/pyrimidine phosphoribosyltransferase family. PyrE subfamily. As to quaternary structure, homodimer. Mg(2+) serves as cofactor.

The enzyme catalyses orotidine 5'-phosphate + diphosphate = orotate + 5-phospho-alpha-D-ribose 1-diphosphate. The protein operates within pyrimidine metabolism; UMP biosynthesis via de novo pathway; UMP from orotate: step 1/2. Functionally, catalyzes the transfer of a ribosyl phosphate group from 5-phosphoribose 1-diphosphate to orotate, leading to the formation of orotidine monophosphate (OMP). The chain is Orotate phosphoribosyltransferase from Escherichia coli O127:H6 (strain E2348/69 / EPEC).